Reading from the N-terminus, the 253-residue chain is 1-(5-phosphoribosyl)-5-[(5-phosphoribosylamino)methylideneamino] imidazole-4-carboxamide isomerase (253 aa).

Residue D8 is the Proton acceptor of the active site. D131 (proton donor) is an active-site residue.

Belongs to the HisA/HisF family.

It is found in the cytoplasm. The catalysed reaction is 1-(5-phospho-beta-D-ribosyl)-5-[(5-phospho-beta-D-ribosylamino)methylideneamino]imidazole-4-carboxamide = 5-[(5-phospho-1-deoxy-D-ribulos-1-ylimino)methylamino]-1-(5-phospho-beta-D-ribosyl)imidazole-4-carboxamide. Its pathway is amino-acid biosynthesis; L-histidine biosynthesis; L-histidine from 5-phospho-alpha-D-ribose 1-diphosphate: step 4/9. The protein is 1-(5-phosphoribosyl)-5-[(5-phosphoribosylamino)methylideneamino] imidazole-4-carboxamide isomerase of Polynucleobacter necessarius subsp. necessarius (strain STIR1).